The primary structure comprises 174 residues: MEGDGGVQLTQSPDSLTEEDVCVIQDTWKPVYAERDNAGVAVLVRFFTNFPSAKQYFEHFRELQDPAEMQQNAQLKEHGQRVLNALNTLVENLRDADKLNTIFNQMGKSHALRHKVDPVYFKILAGVILEVLVEAFPQCFSPAEVQSSWSKLMGILYWQMNRVYAEVGWENSKK.

Positions 15 to 165 (SLTEEDVCVI…LYWQMNRVYA (151 aa)) constitute a Globin domain. H78 and H110 together coordinate heme b.

Belongs to the globin family. As to quaternary structure, monomeric. As to expression, expressed in all tissues examined with highest levels in brain, eye, gut and heart.

The protein localises to the cytoplasm. Its subcellular location is the nucleus. The catalysed reaction is Fe(II)-heme b-[protein] + nitric oxide + O2 = Fe(III)-heme b-[protein] + nitrate. The enzyme catalyses Fe(III)-heme b-[protein] + nitric oxide + H2O = Fe(II)-heme b-[protein] + nitrite + 2 H(+). It carries out the reaction 2 superoxide + 2 H(+) = H2O2 + O2. It catalyses the reaction H2O2 + AH2 = A + 2 H2O. Functionally, probable multifunctional globin with a hexacoordinated heme iron required for the catalysis of various reactions depending on redox condition of the cell as well as oxygen availability. Has a nitric oxide dioxygenase (NOD) activity and is most probably involved in cell-mediated and oxygen-dependent nitric oxide consumption. Under normoxic conditions functions as a nitric oxide dioxygenase (NOD) but under hypoxic conditions the globin may switch its function to that of a nitrite (NO2) reductase (NiR), generating nitric oxide. Could also have peroxidase and superoxide dismutase activities, detoxifying reactive oxygen species and protecting cells against oxidative stress. Also binds dioxygen with low affinity and could function as an oxygen sensor but has probably no function as a respiratory oxygen carrier. This chain is Cytoglobin-1 (cygb1), found in Danio rerio (Zebrafish).